Here is a 142-residue protein sequence, read N- to C-terminus: Putative pre-16S rRNA nuclease (142 aa).

It belongs to the YqgF nuclease family.

It localises to the cytoplasm. In terms of biological role, could be a nuclease involved in processing of the 5'-end of pre-16S rRNA. The chain is Putative pre-16S rRNA nuclease from Nitratidesulfovibrio vulgaris (strain DP4) (Desulfovibrio vulgaris).